Reading from the N-terminus, the 417-residue chain is Serine hydroxymethyltransferase (417 aa).

Residues Leu122 and 126–128 (GHL) each bind (6S)-5,6,7,8-tetrahydrofolate. Lys231 is modified (N6-(pyridoxal phosphate)lysine).

Belongs to the SHMT family. As to quaternary structure, homodimer. It depends on pyridoxal 5'-phosphate as a cofactor.

The protein localises to the cytoplasm. It catalyses the reaction (6R)-5,10-methylene-5,6,7,8-tetrahydrofolate + glycine + H2O = (6S)-5,6,7,8-tetrahydrofolate + L-serine. It functions in the pathway one-carbon metabolism; tetrahydrofolate interconversion. The protein operates within amino-acid biosynthesis; glycine biosynthesis; glycine from L-serine: step 1/1. Its function is as follows. Catalyzes the reversible interconversion of serine and glycine with tetrahydrofolate (THF) serving as the one-carbon carrier. This reaction serves as the major source of one-carbon groups required for the biosynthesis of purines, thymidylate, methionine, and other important biomolecules. Also exhibits THF-independent aldolase activity toward beta-hydroxyamino acids, producing glycine and aldehydes, via a retro-aldol mechanism. The chain is Serine hydroxymethyltransferase from Caldicellulosiruptor saccharolyticus (strain ATCC 43494 / DSM 8903 / Tp8T 6331).